A 475-amino-acid chain; its full sequence is Pup--protein ligase (475 aa).

Mg(2+) is bound at residue glutamate 19. Position 64 (arginine 64) interacts with ATP. Tyrosine 66 is a Mg(2+) binding site. The Proton acceptor role is filled by aspartate 68. Glutamate 74 is a Mg(2+) binding site. ATP is bound by residues threonine 77 and tryptophan 436.

The protein belongs to the Pup ligase/Pup deamidase family. Pup-conjugating enzyme subfamily.

It carries out the reaction ATP + [prokaryotic ubiquitin-like protein]-L-glutamate + [protein]-L-lysine = ADP + phosphate + N(6)-([prokaryotic ubiquitin-like protein]-gamma-L-glutamyl)-[protein]-L-lysine.. It participates in protein degradation; proteasomal Pup-dependent pathway. It functions in the pathway protein modification; protein pupylation. Catalyzes the covalent attachment of the prokaryotic ubiquitin-like protein modifier Pup to the proteasomal substrate proteins, thereby targeting them for proteasomal degradation. This tagging system is termed pupylation. The ligation reaction involves the side-chain carboxylate of the C-terminal glutamate of Pup and the side-chain amino group of a substrate lysine. This is Pup--protein ligase from Corynebacterium aurimucosum (strain ATCC 700975 / DSM 44827 / CIP 107346 / CN-1) (Corynebacterium nigricans).